The following is a 2672-amino-acid chain: eIF-2-alpha kinase activator GCN1 (2672 aa).

HEAT repeat units lie at residues leucine 5 to leucine 42, asparagine 79 to serine 117, cysteine 174 to leucine 211, glutamine 227 to serine 267, phenylalanine 329 to asparagine 366, glutamate 372 to glutamate 410, histidine 509 to isoleucine 549, lysine 611 to isoleucine 648, isoleucine 706 to valine 745, glutamine 902 to isoleucine 932, and serine 933 to glutamate 970. An HEAT 12; degenerate repeat occupies leucine 975–isoleucine 994. The stretch at proline 995–alanine 1030 is one HEAT 13; degenerate repeat. HEAT repeat units follow at residues proline 1031 to phenylalanine 1067, valine 1099 to glutamate 1138, serine 1185 to isoleucine 1224, glutamine 1243 to glutamine 1281, alanine 1284 to glutamine 1321, leucine 1363 to lysine 1401, proline 1405 to glycine 1442, glycine 1444 to threonine 1480, alanine 1484 to asparagine 1521, glutamate 1523 to aspartate 1559, proline 1561 to threonine 1598, proline 1603 to glutamate 1640, glutamate 1641 to leucine 1679, lysine 1681 to serine 1717, proline 1721 to threonine 1758, alanine 1760 to glycine 1796, aspartate 1825 to arginine 1862, alanine 1863 to glycine 1903, alanine 1905 to threonine 1942, glutamine 1947 to lysine 1984, threonine 1985 to proline 2024, leucine 2026 to tyrosine 2055, arginine 2057 to aspartate 2095, glutamate 2097 to leucine 2134, valine 2138 to lysine 2175, arginine 2206 to alanine 2243, valine 2250 to methionine 2286, proline 2290 to arginine 2328, glycine 2347 to leucine 2384, valine 2392 to lysine 2429, glycine 2450 to glutamate 2487, and glutamate 2506 to aspartate 2546. The interval leucine 1330–glutamate 1641 is EF3-like region. Residues glycine 2207–leucine 2356 form an RWDBD region region.

This sequence belongs to the GCN1 family. Interacts (via N- and C-terminus) with GCN2 (via N-terminal RWD domain); this interaction stimulates GCN2 kinase activity in a GCN20-dependent manner in response to amino acid starvation. Interacts (via C-terminus) with GCN20 (via N-terminus); this interaction stimulates GCN2 kinase activity in response to amino acid starvation. The GCN1-GCN20 complex interacts with GCN2 on translating ribosomes in amino acid-starved cells; GCN1 may bind near the ribosomal A-site and promotes the transfer of uncharged tRNAs from the A-site to the tRNA-binding domain in GCN2 for its subsequent kinase activation, and hence allowing GCN4 translational activation and derepression of amino acid biosynthetic genes. Interacts (via C-terminus) with YIH1 (via N-terminus); this interaction reduces the GCN1-GCN20 complex formation and prevents the interaction of GCN1 with GCN2 and GCN2 kinase activation in amino acid-starved cells. Interacts with GIR2; this interaction prevents the interaction of GCN1 with GCN2 and GCN2 kinase activation in amino acid-starved cells. Interacts (via middle region) with RPS10A and RPS10B; these interactions are direct and promote GCN2 kinase activation. Associates (via N-terminus) with ribosomes; this association is stimulated in a ATP- and GCN20-dependent manner and is necessary to activate GCN2 kinase activity.

Its subcellular location is the cytoplasm. Functionally, ribosome collision sensor that activates a translation quality control pathway when a ribosome has stalled during translation. Directly binds to the ribosome and acts as a sentinel for colliding ribosomes. GCN1 also acts as a positive activator of the integrated stress response (ISR) by mediating activation of GCN2 in response to low amino acid, carbon, or purine availability. Component of the GCN1-GCN20 complex that forms a complex with GCN2 on translating ribosomes: during this process, GCN1 acts as a chaperone to facilitate delivery of uncharged tRNAs that enter the A-site of ribosomes to the tRNA-binding domain of GCN2, and hence stimulating GCN2 kinase activity, leading to phosphorylation of eukaryotic translation initiation factor 2 (eIF-2-alpha/SUI2). eIF-2-alpha/SUI2 phosphorylation converts eIF-2-alpha/SUI2 into a global protein synthesis inhibitor, leading to a global attenuation of cap-dependent translation, and thus to a reduced overall utilization of amino acids, while concomitantly initiating the preferential translation of ISR-specific mRNAs, such as the transcriptional activator GCN4, and hence allowing GCN4-mediated reprogramming of amino acid biosynthetic gene expression to alleviate nutrient depletion. The chain is eIF-2-alpha kinase activator GCN1 from Saccharomyces cerevisiae (strain ATCC 204508 / S288c) (Baker's yeast).